Reading from the N-terminus, the 134-residue chain is Auxin-responsive protein SAUR40 (134 aa).

This sequence belongs to the ARG7 family. Interacts with and inhibits PP2C-D subfamily of type 2C phosphatases such as PP2C67/PP2C-D1.

The protein localises to the cytoplasm. Its function is as follows. Provide a mechanistic link between auxin and plasma membrane H(+)-ATPases (PM H(+)-ATPases, e.g. AHA1 and AHA2), and triggers PM H(+)-ATPases activity by promoting phosphorylation of their C-terminal autoinhibitory domain as a result of PP2C-D subfamily of type 2C phosphatases inhibition, thus leading to the acidification of the apoplast and the facilitation of solutes and water uptake to drive cell expansion. Plays a role in the regulation of cell expansion, root meristem patterning and auxin transport. This is Auxin-responsive protein SAUR40 from Arabidopsis thaliana (Mouse-ear cress).